The chain runs to 505 residues: MFGSLLLGIATLLGAIYAFLVSNFGHWRRRGVTEPRALPLFGSFPNMIWPRQHFTMDMRDIYMHYRNTHSYVGCYLLRAPKLLVLEPRLVYEIYVSAFSHFENNDASKMVDIAKDRLVALNPFVLEGEEWRHQRAVFSTLLTNGRIRTTHAIMQRVCLDLCQFIAIKSAGGKDLDCIDLGLRFTGESLFDCVLGIQARTFTDNPLPVVRQNHEMSAENRGLAIAGAVHGLFPNLPRWLRPKVFPRSHDRFYGQMISEALRLRRSKHQERNDFINHLLEMQRELDLSEEDMASHAMTFMFDGLDTTSNSIAHCLLLLGRNPDCQRRLYEELQLVNPGGYLPDLDALIDLPYLSACFNESLRIYPAGGWASKTCTKEYELRGSHHSEPLKLRPGDHVMVPIYALHNDPDLYPEPDVFRPERFLDGGLKNCKQQGIFLGFGNGPRQCVGMRLGLAMAKAALAAIVQRFEVVVSPRTLNGTELDPLIFVGVHKGGIWLQFVPRKNVTTK.

C444 is a heme binding site.

This sequence belongs to the cytochrome P450 family. Heme is required as a cofactor.

It is found in the endoplasmic reticulum membrane. Its subcellular location is the microsome membrane. Functionally, may be involved in the metabolism of insect hormones and in the breakdown of synthetic insecticides. This chain is Probable cytochrome P450 28c1 (Cyp28c1), found in Drosophila melanogaster (Fruit fly).